Here is a 326-residue protein sequence, read N- to C-terminus: tRNA-modifying protein YgfZ (326 aa).

Folate-binding residues include W27 and W189.

The protein belongs to the tRNA-modifying YgfZ family.

The protein localises to the cytoplasm. Functionally, folate-binding protein involved in regulating the level of ATP-DnaA and in the modification of some tRNAs. It is probably a key factor in regulatory networks that act via tRNA modification, such as initiation of chromosomal replication. This is tRNA-modifying protein YgfZ from Shigella boydii serotype 4 (strain Sb227).